The following is a 662-amino-acid chain: Calcium-dependent protease (662 aa).

Positions 196–529 (QWHLKQTTIG…YGRINALKAV (334 aa)) constitute a Peptidase S8 domain. Residues D233, H270, and S466 each act as charge relay system in the active site. The 128-residue stretch at 535–662 (AQPEPVSIFT…IRSLTIELGF (128 aa)) folds into the P/Homo B domain.

It belongs to the peptidase S8 family.

The protein resides in the cytoplasm. Degrades phycobiliproteins in vitro. Has a substrate specificity similar to that of trypsin. This Trichormus variabilis (strain ATCC 29413 / PCC 7937) (Anabaena variabilis) protein is Calcium-dependent protease (prcA).